Reading from the N-terminus, the 506-residue chain is Sucrose transport protein SUT3 (506 aa).

The Cytoplasmic portion of the chain corresponds to 1–20 (MAVDMELDGGGDGKGKAPPQ). The helical transmembrane segment at 21 to 41 (ISLSGLFLACMVAGGVQYGWA) threads the bilayer. The Extracellular segment spans residues 42–54 (LQLSLLTPYIQTL). Residues 55-75 (GIPHALTSVMWLCGPIAGLIV) form a helical membrane-spanning segment. Residues 76–94 (QPCVGLYSDKCTSSLGRRR) are Cytoplasmic-facing. Residues 95–115 (PFILTGCIIICISVIVIGFSS) traverse the membrane as a helical segment. Residues 116–135 (DIGYALGDATEDCKVYRGPR) are Extracellular-facing. Residues 136–156 (YHAAAAFILGFWLLDFSNNTV) traverse the membrane as a helical segment. The Cytoplasmic segment spans residues 157 to 171 (QGPARALMADLSGRH). A helical membrane pass occupies residues 172-192 (GPSAANAIFCSWMALGNILGY). Residues 193–220 (SSGSTNDWHKWFPFLMTRACCEACANLK) are Extracellular-facing. A helical membrane pass occupies residues 221–241 (AAFLVAVVFLGLSTAVTMVFA). Residues 242 to 275 (REVALDPVAAAKRNEGEASGPLAVFKGMKNLPVG) are Cytoplasmic-facing. A helical transmembrane segment spans residues 276–296 (MPSVLIVTGLTWLSWFPFILF). Residues 297–327 (DTDWMGREIYHGRPDGSPAEVTAFQEGVRQG) lie on the Extracellular side of the membrane. Residues 328 to 348 (AFGLLLNSIVLGISSFLIEPM) form a helical membrane-spanning segment. The Cytoplasmic portion of the chain corresponds to 349 to 355 (CRRLGAR). The chain crosses the membrane as a helical span at residues 356 to 376 (AVWVMSSAVVCVAMAAVSVLS). At 377 to 404 (AWSLGDFGGSVQDAARAPAEEGGVRASA) the chain is on the extracellular side. The helical transmembrane segment at 405-425 (LALFVFLGLPFAVLCSVPFAV) threads the bilayer. Over 426 to 441 (TAQLTASRGGGQGLCT) the chain is Cytoplasmic. The helical transmembrane segment at 442–462 (GVLNISIVVPQMAIALGAGPW) threads the bilayer. Over 463–470 (DELFGEGN) the chain is Extracellular. The helical transmembrane segment at 471–491 (IPAFAMASVFAAAAAAAGVVL) threads the bilayer. Topologically, residues 492–506 (LPKVSVRSVSMAGGH) are cytoplasmic.

The protein belongs to the glycoside-pentoside-hexuronide (GPH) cation symporter transporter (TC 2.A.2.4) family. Homodimer.

The protein localises to the cell membrane. The protein operates within glycan biosynthesis; sucrose metabolism. Functionally, responsible for the transport of sucrose into the cell, with the concomitant uptake of protons (symport system). May also transport other glucosides. The chain is Sucrose transport protein SUT3 (SUT3) from Oryza sativa subsp. indica (Rice).